Here is a 388-residue protein sequence, read N- to C-terminus: Transposase for insertion sequence element IS406 (388 aa).

It belongs to the transposase mutator family.

Functionally, required for the transposition of the insertion element. In Burkholderia multivorans (strain ATCC 17616 / 249), this protein is Transposase for insertion sequence element IS406.